The following is a 1742-amino-acid chain: Meiosis regulator and mRNA stability factor 1 (1742 aa).

Serine 65 carries the post-translational modification Phosphoserine. The region spanning 351 to 488 is the NYN domain; it reads IGVFWDIENC…ALLHHANELI (138 aa). Disordered regions lie at residues 620–642 and 655–721; these read PSSA…TRNA and SKTG…KEKE. The span at 631-642 shows a compositional bias: polar residues; that stretch reads SQANSGSATRNA. Positions 673–689 are enriched in low complexity; sequence APPHRSSSAAAPAPKAP. Tyrosine 696 carries the post-translational modification Phosphotyrosine. Serine 757 carries the phosphoserine modification. The 80-residue stretch at 788 to 867 folds into the RRM domain; it reads VDVQISNLDY…KKILVSLATG (80 aa). 2 HTH OST-type domains span residues 872-946 and 1000-1077; these read SLSL…SPLG and SLKT…HNKP. Phosphoserine is present on residues serine 1089 and serine 1091. 6 consecutive HTH OST-type domains span residues 1097-1171, 1173-1247, 1257-1332, 1333-1408, 1409-1484, and 1486-1560; these read QLIQ…LTHR, QVKR…CIPR, RTKQ…TEVE, RFKA…INRK, SLRA…CVKL, and SLYL…LKND. At serine 1571 the chain carries Phosphoserine. The disordered stretch occupies residues 1678–1729; that stretch reads IRNENLPPDPSSPGVSAAVPAPPSPSSETPESLLSKDPTESPAKKQPKNRVK. The segment covering 1703-1712 has biased composition (low complexity); sequence SSETPESLLS.

As to quaternary structure, interacts with LIMK2.

It is found in the peroxisome. In terms of biological role, essential regulator of oogenesis required for female meiotic progression to repress transposable elements and preventing their mobilization, which is essential for the germline integrity. Probably acts via some RNA metabolic process, equivalent to the piRNA system in males, which mediates the repression of transposable elements during meiosis by forming complexes composed of RNAs and governs the methylation and subsequent repression of transposons. Also required to protect from DNA double-strand breaks. This chain is Meiosis regulator and mRNA stability factor 1, found in Bos taurus (Bovine).